Here is a 231-residue protein sequence, read N- to C-terminus: Protein N-terminal glutamine amidohydrolase (231 aa).

Positions methionine 1–leucine 21 are disordered. The span at threonine 11–leucine 21 shows a compositional bias: pro residues. Active-site residues include cysteine 33, histidine 89, and aspartate 108.

Belongs to the NTAQ1 family. As to quaternary structure, monomer.

It catalyses the reaction N-terminal L-glutaminyl-[protein] + H2O = N-terminal L-glutamyl-[protein] + NH4(+). Functionally, mediates the side-chain deamidation of N-terminal glutamine residues to glutamate, an important step in N-end rule pathway of protein degradation. Conversion of the resulting N-terminal glutamine to glutamate renders the protein susceptible to arginylation, polyubiquitination and degradation as specified by the N-end rule. Does not act on substrates with internal or C-terminal glutamine and does not act on non-glutamine residues in any position. This chain is Protein N-terminal glutamine amidohydrolase, found in Oryza sativa subsp. indica (Rice).